The sequence spans 578 residues: Poly(A) RNA polymerase cid13 (578 aa).

D110 and D112 together coordinate Mg(2+). Residues 275-330 form the PAP-associated domain; sequence SLGILFVEFFRFFGYLFDYEHFVLSIRHGTFLSKRAKGWQFQLNNFLCVEEPFHTS. The disordered stretch occupies residues 495–565; that stretch reads SHHFDERHGG…SEVVSPVSLH (71 aa). A compositionally biased stretch (basic and acidic residues) spans 496 to 510; sequence HHFDERHGGDRHEKN. A compositionally biased stretch (basic residues) spans 516–527; that stretch reads RYSRNKFHKKKQ. A compositionally biased stretch (low complexity) spans 547–565; sequence NSPPSNSSSSEVVSPVSLH.

Belongs to the DNA polymerase type-B-like family. As to quaternary structure, interacts with pab1. Mg(2+) is required as a cofactor. Mn(2+) serves as cofactor.

It is found in the cytoplasm. The protein localises to the nucleus. The enzyme catalyses RNA(n) + ATP = RNA(n)-3'-adenine ribonucleotide + diphosphate. Its function is as follows. Polymerase that creates the 3' poly(A) tail of suc22 mRNA. This Schizosaccharomyces pombe (strain 972 / ATCC 24843) (Fission yeast) protein is Poly(A) RNA polymerase cid13 (cid13).